The following is a 267-amino-acid chain: Hydroxyethylthiazole kinase (267 aa).

Met-44 serves as a coordination point for substrate. ATP contacts are provided by Lys-120 and Thr-166. Gly-193 contacts substrate.

Belongs to the Thz kinase family. It depends on Mg(2+) as a cofactor.

The enzyme catalyses 5-(2-hydroxyethyl)-4-methylthiazole + ATP = 4-methyl-5-(2-phosphooxyethyl)-thiazole + ADP + H(+). Its pathway is cofactor biosynthesis; thiamine diphosphate biosynthesis; 4-methyl-5-(2-phosphoethyl)-thiazole from 5-(2-hydroxyethyl)-4-methylthiazole: step 1/1. Functionally, catalyzes the phosphorylation of the hydroxyl group of 4-methyl-5-beta-hydroxyethylthiazole (THZ). The chain is Hydroxyethylthiazole kinase from Desulfitobacterium hafniense (strain DSM 10664 / DCB-2).